The primary structure comprises 591 residues: Aspartate--tRNA(Asp/Asn) ligase (591 aa).

E174 contacts L-aspartate. The interval 198–201 (QLFK) is aspartate. R220 lines the L-aspartate pocket. ATP is bound by residues 220-222 (RDE) and Q229. H450 provides a ligand contact to L-aspartate. Residue E483 participates in ATP binding. R490 provides a ligand contact to L-aspartate. 535–538 (GLDR) is an ATP binding site.

It belongs to the class-II aminoacyl-tRNA synthetase family. Type 1 subfamily. Homodimer.

It localises to the cytoplasm. It carries out the reaction tRNA(Asx) + L-aspartate + ATP = L-aspartyl-tRNA(Asx) + AMP + diphosphate. Aspartyl-tRNA synthetase with relaxed tRNA specificity since it is able to aspartylate not only its cognate tRNA(Asp) but also tRNA(Asn). Reaction proceeds in two steps: L-aspartate is first activated by ATP to form Asp-AMP and then transferred to the acceptor end of tRNA(Asp/Asn). In Pseudomonas putida (strain ATCC 700007 / DSM 6899 / JCM 31910 / BCRC 17059 / LMG 24140 / F1), this protein is Aspartate--tRNA(Asp/Asn) ligase.